A 322-amino-acid chain; its full sequence is NADH-cytochrome b5 reductase 2 (322 aa).

Residues 31 to 48 form a helical membrane-spanning segment; the sequence is LAPIYAAVGITGVGVGLY. Residues 72-176 enclose the FAD-binding FR-type domain; the sequence is QGWFDLKLSE…KGPIVKYPWE (105 aa). An FAD-binding site is contributed by 179 to 214; the sequence is KHNHICLIAGGTGITPMYQLAREIFKNPEDQTKVTL.

This sequence belongs to the flavoprotein pyridine nucleotide cytochrome reductase family. The cofactor is FAD.

Its subcellular location is the mitochondrion outer membrane. It catalyses the reaction 2 Fe(III)-[cytochrome b5] + NADH = 2 Fe(II)-[cytochrome b5] + NAD(+) + H(+). In terms of biological role, may mediate the reduction of outer membrane cytochrome b5. The chain is NADH-cytochrome b5 reductase 2 (mcr1) from Aspergillus niger (strain ATCC MYA-4892 / CBS 513.88 / FGSC A1513).